We begin with the raw amino-acid sequence, 471 residues long: Cytochrome P450 monooxygenase afvE (471 aa).

Residues 265 to 285 form a helical membrane-spanning segment; it reads IIFYHFELSTPVAFFIIFAVY. Residue cysteine 410 participates in heme binding.

Belongs to the cytochrome P450 family. It depends on heme as a cofactor.

The protein resides in the membrane. It functions in the pathway secondary metabolite biosynthesis. In terms of biological role, cytochrome P450 monooxygenase; part of the gene cluster that mediates the biosynthesis of aflavarin, a bicoumarin that exhibits anti-insectan activity against the fungivorous beetle C.hemipterus. The polypeptide is Cytochrome P450 monooxygenase afvE (Aspergillus flavus (strain ATCC 200026 / FGSC A1120 / IAM 13836 / NRRL 3357 / JCM 12722 / SRRC 167)).